The chain runs to 351 residues: F-box protein At1g70590 (351 aa).

Residues Met1 to Asn60 are disordered. The segment covering Ile32–Lys41 has biased composition (polar residues). Low complexity predominate over residues Ser42 to Ser59. In terms of domain architecture, F-box spans Phe62–Trp111. The Sel1-like repeat unit spans residues Ser105 to Ser141. A TPR repeat occupies Thr142 to Val175.

This is F-box protein At1g70590 from Arabidopsis thaliana (Mouse-ear cress).